Here is a 22-residue protein sequence, read N- to C-terminus: Plasticin-TR (22 aa).

The protein belongs to the frog skin active peptide (FSAP) family. Plasticin subfamily. In terms of assembly, exhibits a propensity to self-association and forms helical oligomers in membrane-mimetic environments. As to expression, expressed by the skin glands.

It is found in the secreted. The protein localises to the target cell membrane. Its function is as follows. Has no antimicrobial activity against Gram-negative bacterium E.coli ATCC 25922, Gram-positive bacterium S.epidermidis ATCC 12228 and against fungus C.albicans ATCC 24433 at concentrations up to 100 uM. Has an anti-inflammatory effect, since it inhibits the production of the pro-inflammatory cytokines TNF-alpha and IL-1 beta. Has high activity of stimulation of insulin release, which may protect the species from being eaten by predators by causing fatal hypoglycemia. Is not cytotoxic to cancer line cells. Does not show hemolysis on mouse erythrocytes. Adopts a mixture of alpha-helical and beta-sheet structures. This is Plasticin-TR from Phyllomedusa trinitatis (Trinidad leaf frog).